The primary structure comprises 226 residues: PKHD-type hydroxylase MADE_1018490 (226 aa).

A Fe2OG dioxygenase domain is found at 77–177; the sequence is RIFPPCFNRY…RIAAITWIQS (101 aa). The Fe cation site is built by histidine 95, aspartate 97, and histidine 158. Arginine 168 contributes to the 2-oxoglutarate binding site.

Fe(2+) is required as a cofactor. Requires L-ascorbate as cofactor.

The protein is PKHD-type hydroxylase MADE_1018490 of Alteromonas mediterranea (strain DSM 17117 / CIP 110805 / LMG 28347 / Deep ecotype).